We begin with the raw amino-acid sequence, 117 residues long: MITILLVMLGGGIGAVLRALITNICQRLFNSKIPIATSIVNITGSLIIGFMMGHALDSHHMFPFFVTGVLGGLTTFSTLSSELVNMLSPQFKPIRFVVYSLLQFILGFIACFYGYRI.

A run of 4 helical transmembrane segments spans residues 1 to 21 (MITI…RALI), 33 to 53 (IPIA…FMMG), 61 to 81 (MFPF…TLSS), and 94 to 114 (IRFV…CFYG). Na(+)-binding residues include Gly-71 and Thr-74.

Belongs to the fluoride channel Fluc/FEX (TC 1.A.43) family.

Its subcellular location is the cell membrane. It catalyses the reaction fluoride(in) = fluoride(out). Na(+) is not transported, but it plays an essential structural role and its presence is essential for fluoride channel function. Functionally, fluoride-specific ion channel. Important for reducing fluoride concentration in the cell, thus reducing its toxicity. The protein is Fluoride-specific ion channel FluC 2 of Staphylococcus epidermidis (strain ATCC 35984 / DSM 28319 / BCRC 17069 / CCUG 31568 / BM 3577 / RP62A).